A 192-amino-acid polypeptide reads, in one-letter code: MWLRFCAPALMAWYWVFFPSTSQAATMENDGQDGFWQRAKNNLSETWHNGQSQDLYVPAMTWHNRWTYSRQKIDKYNERPWGAGYGVSRLDSDGDWHGIYLMAFKDSFNKWEPIGGYGYEKRWKPVAGNDDFQLGLGFTAGVTMRDNWNYIPIPVLLPLASINYQRLSFQMTYIPGTHNNGNVYFAWLRWQL.

The N-terminal stretch at 1–24 (MWLRFCAPALMAWYWVFFPSTSQA) is a signal peptide. Catalysis depends on residues histidine 63, aspartate 106, and serine 107.

This sequence belongs to the lipid A palmitoyltransferase family. Homodimer.

The protein resides in the cell outer membrane. The catalysed reaction is a lipid A + a 1,2-diacyl-sn-glycero-3-phosphocholine = a hepta-acyl lipid A + a 2-acyl-sn-glycero-3-phosphocholine. The enzyme catalyses a lipid IVA + a 1,2-diacyl-sn-glycero-3-phosphocholine = a lipid IVB + a 2-acyl-sn-glycero-3-phosphocholine. It catalyses the reaction a lipid IIA + a 1,2-diacyl-sn-glycero-3-phosphocholine = a lipid IIB + a 2-acyl-sn-glycero-3-phosphocholine. Transfers a fatty acid residue from the sn-1 position of a phospholipid to the N-linked hydroxyfatty acid chain on the proximal unit of lipid A or its precursors. The protein is Lipid A acyltransferase PagP of Musicola paradisiaca (strain Ech703) (Dickeya paradisiaca).